Here is a 949-residue protein sequence, read N- to C-terminus: Thrombospondin-4-B (949 aa).

Residues 1–22 (MAGTMHLLTAVSLILMLSSANA) form the signal peptide. The 176-residue stretch at 23–198 (ESTVYNLLTS…LEELKLAYGD (176 aa)) folds into the Laminin G-like domain. Intrachain disulfides connect Cys276–Cys287, Cys281–Cys296, Cys299–Cys310, Cys316–Cys327, Cys321–Cys336, Cys339–Cys363, Cys369–Cys383, Cys377–Cys392, Cys395–Cys407, Cys413–Cys427, Cys421–Cys437, Cys439–Cys450, Cys466–Cys471, Cys476–Cys496, Cys512–Cys532, Cys535–Cys555, Cys571–Cys591, Cys594–Cys614, Cys632–Cys652, Cys672–Cys692, and Cys708–Cys929. One can recognise an EGF-like 1; calcium-binding domain in the interval 312 to 349 (DVDECQFNPCFPGVRCVNMAPGFRCEACPLGFTGKPLE). Residues 365–408 (DIDECKGPDNGGCTANSICVNSVGSYQCGRCKTGFTGDQIRGCK) enclose the EGF-like 2; calcium-binding domain. The region spanning 409–451 (PEKSCGNRLQNPCDPNAQCTEERDGTITCQCGIGWAGNGYLCG) is the EGF-like 3 domain. TSP type-3 repeat units lie at residues 452–484 (KDTD…NSGQ), 485–520 (EDAD…NINQ), 521–543 (QNSD…NPDQ), 544–579 (RDTD…NRDQ), 580–602 (LDRD…NPNQ), 603–640 (SDID…NSSQ), 641–680 (LDTD…NPEQ), and 681–716 (IDDN…EITL). Residues 578 to 671 (DQLDRDGDGV…PDSLPPGPDN (94 aa)) form a disordered region. N-linked (GlcNAc...) asparagine glycans are attached at residues Asn601 and Asn637. Residues 649–660 (GDECDDDDDNDG) show a composition bias toward acidic residues. A TSP C-terminal domain is found at 720–934 (RAYQTVVLDP…LKYRCNDTIP (215 aa)). Residue Asn930 is glycosylated (N-linked (GlcNAc...) asparagine).

Belongs to the thrombospondin family. In terms of assembly, homotrimer; disulfide-linked.

It localises to the endoplasmic reticulum. Its subcellular location is the sarcoplasmic reticulum. The protein resides in the secreted. The protein localises to the extracellular space. It is found in the extracellular matrix. Adhesive glycoprotein that mediates cell-to-cell and cell-to-matrix interactions and may be involved in various processes including cellular proliferation, migration, adhesion and attachment. May play a role in ER stress response. This is Thrombospondin-4-B (thbs4b) from Danio rerio (Zebrafish).